We begin with the raw amino-acid sequence, 908 residues long: Bifunctional uridylyltransferase/uridylyl-removing enzyme (908 aa).

The tract at residues 1–360 is uridylyltransferase; sequence MFDTPAVFAR…LERIFRRRRR (360 aa). The segment at 361 to 718 is uridylyl-removing; that stretch reads IKQGYKVVRG…LDPDEDRDAT (358 aa). Residues 477 to 599 form the HD domain; it reads VDEHTIQTIV…VQTTKRLDLL (123 aa). 2 ACT domains span residues 719 to 801 and 829 to 904; these read RACF…LKSR and IIEV…GAER.

It belongs to the GlnD family. Requires Mg(2+) as cofactor.

The catalysed reaction is [protein-PII]-L-tyrosine + UTP = [protein-PII]-uridylyl-L-tyrosine + diphosphate. It catalyses the reaction [protein-PII]-uridylyl-L-tyrosine + H2O = [protein-PII]-L-tyrosine + UMP + H(+). Its activity is regulated as follows. Uridylyltransferase (UTase) activity is inhibited by glutamine, while glutamine activates uridylyl-removing (UR) activity. Its function is as follows. Modifies, by uridylylation and deuridylylation, the PII regulatory proteins (GlnB and homologs), in response to the nitrogen status of the cell that GlnD senses through the glutamine level. Under low glutamine levels, catalyzes the conversion of the PII proteins and UTP to PII-UMP and PPi, while under higher glutamine levels, GlnD hydrolyzes PII-UMP to PII and UMP (deuridylylation). Thus, controls uridylylation state and activity of the PII proteins, and plays an important role in the regulation of nitrogen assimilation and metabolism. In Ruegeria pomeroyi (strain ATCC 700808 / DSM 15171 / DSS-3) (Silicibacter pomeroyi), this protein is Bifunctional uridylyltransferase/uridylyl-removing enzyme.